The chain runs to 148 residues: Large ribosomal subunit protein bL9 (148 aa).

This sequence belongs to the bacterial ribosomal protein bL9 family.

In terms of biological role, binds to the 23S rRNA. In Salinispora tropica (strain ATCC BAA-916 / DSM 44818 / JCM 13857 / NBRC 105044 / CNB-440), this protein is Large ribosomal subunit protein bL9.